The chain runs to 792 residues: Cadherin-11 (792 aa).

The N-terminal stretch at Met-1 to Ala-22 is a signal peptide. The propeptide occupies Ile-23–Arg-53. Cadherin domains follow at residues Gly-54–Phe-159, Leu-160–Phe-268, Pro-269–Phe-383, Leu-384–Pro-486, and Lys-487–Asn-608. Over Gly-54–Thr-613 the chain is Extracellular. 3 N-linked (GlcNAc...) asparagine glycosylation sites follow: Asn-455, Asn-536, and Asn-594. A helical transmembrane segment spans residues Gly-614–Val-634. The Cytoplasmic portion of the chain corresponds to Thr-635–Ser-792.

It is found in the cell membrane. Its function is as follows. Cadherins are calcium-dependent cell adhesion proteins. They preferentially interact with themselves in a homophilic manner in connecting cells; cadherins may thus contribute to the sorting of heterogeneous cell types. Required for proper focal adhesion assembly. Involved in the regulation of cell migration. The sequence is that of Cadherin-11 (CDH11) from Gallus gallus (Chicken).